Reading from the N-terminus, the 580-residue chain is Arginine--tRNA ligase (580 aa).

A 'HIGH' region motif is present at residues proline 127–histidine 137.

It belongs to the class-I aminoacyl-tRNA synthetase family. As to quaternary structure, monomer.

It localises to the cytoplasm. The catalysed reaction is tRNA(Arg) + L-arginine + ATP = L-arginyl-tRNA(Arg) + AMP + diphosphate. The polypeptide is Arginine--tRNA ligase (Bdellovibrio bacteriovorus (strain ATCC 15356 / DSM 50701 / NCIMB 9529 / HD100)).